Consider the following 210-residue polypeptide: Thymidylate kinase (210 aa).

An ATP-binding site is contributed by 11 to 18 (GLEGAGKS).

Belongs to the thymidylate kinase family.

The enzyme catalyses dTMP + ATP = dTDP + ADP. In terms of biological role, phosphorylation of dTMP to form dTDP in both de novo and salvage pathways of dTTP synthesis. The polypeptide is Thymidylate kinase (Vibrio campbellii (strain ATCC BAA-1116)).